The primary structure comprises 217 residues: Tegument protein BKRF4 (217 aa).

The tract at residues 1 to 217 is disordered; sequence MAMFLKSRGV…GNNNYNWPWL (217 aa). The segment covering 32 to 42 has biased composition (polar residues); that stretch reads YTLGSQASQSI. A compositionally biased stretch (acidic residues) spans 43–79; that stretch reads QEEDVSDTDESDYSDEDEEIDLEEEYPSDEDPSEGSD. The interaction with host histones H3/H4 stretch occupies residues 63 to 64; it reads DL. The interval 81–84 is interaction with host H2A/H2B; sequence DPSW. A compositionally biased stretch (acidic residues) spans 89-102; the sequence is SDESDYSESDEDEA. Low complexity predominate over residues 106-132; the sequence is SQASRSSRVSPSTQQSSGLTPTPSFSR. A compositionally biased stretch (pro residues) spans 136-145; sequence RAPPRPPAPA. Positions 208–217 are enriched in polar residues; sequence GNNNYNWPWL.

It belongs to the lymphocryptovirus BKRF4 family. As to quaternary structure, forms a complex with the host H3/H4 dimer and histone chaperone ASF1. Also forms a complex with host H2A/H2B dimer. Interacts (via C-terminus) with BGLF2; this interaction is important for infectious virion production.

The protein localises to the virion tegument. The protein resides in the host nucleus. It localises to the host cytoplasm. It is found in the host perinuclear region. Functionally, histone-binding protein that binds to histones H2A/H2B, H3/H4 and cellular chromatin to overcome the host DNA damage response triggered by the viral genome ends. Interferes with histone ubiquitination and recruitment of repair proteins. This chain is Tegument protein BKRF4, found in Epstein-Barr virus (strain GD1) (HHV-4).